The primary structure comprises 230 residues: Tol-Pal system protein TolQ (230 aa).

Transmembrane regions (helical) follow at residues 16-36, 139-159, and 171-191; these read LVKL…AIII, YIGL…LGAV, and IAEA…AVMA.

The protein belongs to the ExbB/TolQ family. In terms of assembly, the Tol-Pal system is composed of five core proteins: the inner membrane proteins TolA, TolQ and TolR, the periplasmic protein TolB and the outer membrane protein Pal. They form a network linking the inner and outer membranes and the peptidoglycan layer.

Its subcellular location is the cell inner membrane. Functionally, part of the Tol-Pal system, which plays a role in outer membrane invagination during cell division and is important for maintaining outer membrane integrity. Required, with TolR, for the proton motive force-dependent activation of TolA and for TolA-Pal interaction. The sequence is that of Tol-Pal system protein TolQ from Escherichia coli O157:H7.